Here is a 254-residue protein sequence, read N- to C-terminus: Glutamate racemase (254 aa).

Substrate is bound by residues 7–8 (DS) and 39–40 (YG). The Proton donor/acceptor role is filled by cysteine 70. 71-72 (NT) is a substrate binding site. The active-site Proton donor/acceptor is the cysteine 178. 179 to 180 (TH) contributes to the substrate binding site.

It belongs to the aspartate/glutamate racemases family.

It carries out the reaction L-glutamate = D-glutamate. The protein operates within cell wall biogenesis; peptidoglycan biosynthesis. Its function is as follows. Provides the (R)-glutamate required for cell wall biosynthesis. The protein is Glutamate racemase of Aquifex aeolicus (strain VF5).